The primary structure comprises 412 residues: Maltoporin (412 aa).

The N-terminal stretch at 1–22 is a signal peptide; that stretch reads MKKVSVIAAAVAATLAAGSAFA.

Belongs to the porin LamB (TC 1.B.3) family. Homotrimer formed of three 18-stranded antiparallel beta-barrels, containing three independent channels.

The protein resides in the cell outer membrane. It carries out the reaction beta-maltose(in) = beta-maltose(out). Functionally, involved in the transport of maltose and maltodextrins. This is Maltoporin from Vibrio cholerae serotype O1 (strain ATCC 39315 / El Tor Inaba N16961).